The primary structure comprises 653 residues: Aspartate--tRNA ligase, mitochondrial (653 aa).

A mitochondrion-targeting transit peptide spans 1–46 (MYLGFWLSRLCRGLSRPIGKTMRPIWGSLSRNLALSSQRIPEFSSF). Thr-218 bears the Phosphothreonine mark. A Phosphoserine modification is found at Ser-241. The interval 243–246 (QQFK) is aspartate. Residue Arg-265 participates in L-aspartate binding. ATP-binding positions include 265-267 (RDE) and Glu-534. Arg-541 contributes to the L-aspartate binding site. 583 to 586 (GLDR) is a binding site for ATP.

The protein belongs to the class-II aminoacyl-tRNA synthetase family. Type 1 subfamily. Homodimer.

It localises to the mitochondrion matrix. The protein localises to the mitochondrion membrane. It carries out the reaction tRNA(Asp) + L-aspartate + ATP = L-aspartyl-tRNA(Asp) + AMP + diphosphate. In terms of biological role, catalyzes the attachment of aspartate to tRNA(Asp) in a two-step reaction: aspartate is first activated by ATP to form Asp-AMP and then transferred to the acceptor end of tRNA(Asp). In Mus musculus (Mouse), this protein is Aspartate--tRNA ligase, mitochondrial (Dars2).